The chain runs to 232 residues: Jasmonate ZIM domain-containing protein 1 (232 aa).

The interval M1–S24 is disordered. The segment covering E10–E19 has biased composition (basic and acidic residues). Residues P96–K131 enclose the Tify domain. 2 stretches are compositionally biased toward polar residues: residues A133–S142 and M158–T167. The tract at residues A133 to F232 is disordered. A Nuclear localization signal motif is present at residues P182 to K189. The short motif at R183–Q205 is the Jas element. Residues F190–N199 are compositionally biased toward basic and acidic residues.

The protein belongs to the TIFY/JAZ family. (Microbial infection) Interacts with the pathogenic Pseudomonas syringae HopZ1a protein; this interaction leads to its degradation. Post-translationally, ubiquitinated. Targeted for degradation by the SCF(COI1) E3 ubiquitin ligase-proteasome pathway during jasmonate signaling. In terms of processing, (Microbial infection) Acetylated by Pseudomonas syringae HopZ1a. In terms of tissue distribution, mostly expressed in leaves and flowers and, to a lower extent, in grean pods and roots.

It localises to the nucleus. It is found in the cell membrane. In terms of biological role, repressor of jasmonate responses. The protein is Jasmonate ZIM domain-containing protein 1 of Glycine max (Soybean).